The chain runs to 315 residues: Voltage-dependent calcium channel gamma-3 subunit (315 aa).

4 helical membrane passes run 8-28, 104-124, 135-155, and 181-201; these read VQMLITTVGAFAAFSLMTIAV, SSVFPILSVTLLFFGGLCVAA, ILSAGIFFVSAGLSNIIGIIV, and FGAFSFIIAEIVGVVAVHIYI. The segment at 232–252 is disordered; that stretch reads RRRSSSRSTEPRSRDLSPISK. Ser248 bears the Phosphoserine mark.

Belongs to the PMP-22/EMP/MP20 family. CACNG subfamily. As to quaternary structure, the L-type calcium channel is composed of five subunits: alpha-1, alpha-2/delta, beta and gamma. Acts as an auxiliary subunit for AMPA-selective glutamate receptors (AMPARs). Found in a complex with GRIA1, GRIA2, GRIA3, GRIA4, CNIH2, CNIH3, CACNG2, CACNG4, CACNG5, CACNG7 and CACNG8. Interacts with AP4M1 and GRIA1; associates GRIA1 with the adaptor protein complex 4 (AP-4) to target GRIA1 to the somatodendritic compartment of neurons.

Its subcellular location is the membrane. Regulates the trafficking and gating properties of AMPA-selective glutamate receptors (AMPARs). Promotes their targeting to the cell membrane and synapses and modulates their gating properties by slowing their rates of activation, deactivation and desensitization. Does not show subunit-specific AMPA receptor regulation and regulates all AMPAR subunits. Thought to stabilize the calcium channel in an inactivated (closed) state. The sequence is that of Voltage-dependent calcium channel gamma-3 subunit (CACNG3) from Bos taurus (Bovine).